Reading from the N-terminus, the 529-residue chain is All-trans-zeta-carotene desaturase (529 aa).

Residue 12-45 (IVVGAGPGGLSAAINLAGQGFRVTVVEKDAVPGG) coordinates FAD.

Belongs to the carotenoid/retinoid oxidoreductase family. Requires FAD as cofactor.

It catalyses the reaction all-trans-zeta-carotene + 2 A = all-trans-lycopene + 2 AH2. It participates in carotenoid biosynthesis; lycopene biosynthesis. In terms of biological role, dehydrogenates carotenes in the trans conformation: converts all-trans-zeta-carotene into all-trans-lycopene, one of the last dehydrogenation steps of lycopene biosynthesis. The sequence is that of All-trans-zeta-carotene desaturase (carC) from Myxococcus xanthus.